The sequence spans 333 residues: L-lactate dehydrogenase A chain (333 aa).

NAD(+)-binding positions include 30–58 (GAVG…IEDK) and Arg-100. Substrate contacts are provided by Arg-107, Asn-139, and Arg-170. NAD(+) is bound at residue Asn-139. The Proton acceptor role is filled by His-194. A substrate-binding site is contributed by Thr-249.

The protein belongs to the LDH/MDH superfamily. LDH family. Homotetramer.

The protein localises to the cytoplasm. The enzyme catalyses (S)-lactate + NAD(+) = pyruvate + NADH + H(+). The protein operates within fermentation; pyruvate fermentation to lactate; (S)-lactate from pyruvate: step 1/1. Functionally, interconverts simultaneously and stereospecifically pyruvate and lactate with concomitant interconversion of NADH and NAD(+). This chain is L-lactate dehydrogenase A chain (LDHA), found in Ambystoma mexicanum (Axolotl).